The chain runs to 385 residues: Bifunctional chorismate mutase/prephenate dehydratase (385 aa).

Residues 1–92 (MPANNSLLIF…ESVATQKKLL (92 aa)) enclose the Chorismate mutase domain. 7 residues coordinate substrate: R11, R28, K39, D48, E52, S84, and Q88. The Prephenate dehydratase domain occupies 105–285 (NFSFLGPKGS…NITRFILLNR (181 aa)). A regulatory region spans residues 286-385 (NPKKISKNIP…PSEKITPIAP (100 aa)). Positions 299-376 (TLIFTTGQEA…RFIKILGCYP (78 aa)) constitute an ACT domain.

Its subcellular location is the cytoplasm. It carries out the reaction chorismate = prephenate. It catalyses the reaction prephenate + H(+) = 3-phenylpyruvate + CO2 + H2O. The protein operates within amino-acid biosynthesis; L-phenylalanine biosynthesis; phenylpyruvate from prephenate: step 1/1. It functions in the pathway metabolic intermediate biosynthesis; prephenate biosynthesis; prephenate from chorismate: step 1/1. In terms of biological role, catalyzes the Claisen rearrangement of chorismate to prephenate and the decarboxylation/dehydration of prephenate to phenylpyruvate. The polypeptide is Bifunctional chorismate mutase/prephenate dehydratase (pheA) (Buchnera aphidicola subsp. Acyrthosiphon pisum (strain APS) (Acyrthosiphon pisum symbiotic bacterium)).